We begin with the raw amino-acid sequence, 93 residues long: Putative sodium channel toxin Ts41 (93 aa).

The signal sequence occupies residues 1–23; it reads MKIGVLFTIISMLCLLEVRKICS. Disulfide bonds link cysteine 22/cysteine 87, cysteine 39/cysteine 62, cysteine 48/cysteine 67, and cysteine 52/cysteine 69. The region spanning 26-88 is the LCN-type CS-alpha/beta domain; it reads EGGYPRYFSF…FWNVYRKYCK (63 aa).

This sequence belongs to the long (4 C-C) scorpion toxin superfamily. As to expression, expressed by the venom gland.

The protein resides in the secreted. Its function is as follows. The edited BmKBTx-like may modulate voltage-gated sodium channels (Nav). Functionally, the non-edited form is able to form a heterodimer. In orthologs, a heterodimer with LVP beta-chain induces lipolysis in rat adipocytes, which is mediated through the beta-2 adrenergic receptor pathway (ADRB2). Since no LVP beta-chains have been identified in the venom of this scorpion, it is possible that this protein is not involved in a lipolysis process. The chain is Putative sodium channel toxin Ts41 from Tityus serrulatus (Brazilian scorpion).